Reading from the N-terminus, the 81-residue chain is UPF0434 protein msl4429 (81 aa).

The protein belongs to the UPF0434 family.

This is UPF0434 protein msl4429 from Mesorhizobium japonicum (strain LMG 29417 / CECT 9101 / MAFF 303099) (Mesorhizobium loti (strain MAFF 303099)).